Reading from the N-terminus, the 228-residue chain is Prolactin-2A1 (228 aa).

The signal sequence occupies residues 1-28 (MQLSVTHPCCRTLILLLVSNLLLWESEA). 2 disulfide bridges follow: Cys-87/Cys-203 and Cys-220/Cys-228.

The protein belongs to the somatotropin/prolactin family. In terms of tissue distribution, expressed specifically in the placenta. Expression restricted to the junctional zone of the chorioallantoic placenta.

Its subcellular location is the secreted. This chain is Prolactin-2A1 (Prl2a1), found in Mus musculus (Mouse).